The following is a 970-amino-acid chain: Probable histidine kinase 6 (970 aa).

Topologically, residues 1–12 (MGKPEARSGWRN) are cytoplasmic. The helical transmembrane segment at 13–33 (AAAAAWVLVAVACAAYMHWHL) threads the bilayer. At 34 to 306 (RRETMDRAEE…YRQKPPLPWS (273 aa)) the chain is on the extracellular side. The 213-residue stretch at 82 to 294 (FPSAIDQDTF…GDPFRAHEMR (213 aa)) folds into the CHASE domain. The chain crosses the membrane as a helical span at residues 307–327 (AITNPLGTFVIWMLVGYIICA). The Cytoplasmic segment spans residues 328-970 (AWSRYDKVSE…LVVGTKESAV (643 aa)). Residues 362–651 (TVSHEIRTPM…TFTFSAVLKR (290 aa)) form the Histidine kinase domain. The residue at position 365 (histidine 365) is a Phosphohistidine; by autocatalysis. 2 Response regulatory domains span residues 676-802 (KAIL…QQLL) and 827-962 (NILI…SRLV). Aspartate 877 is modified (4-aspartylphosphate).

In terms of processing, activation probably requires a transfer of a phosphate group between a His in the transmitter domain and an Asp of the receiver domain. In terms of tissue distribution, highly expressed in spikelets and at lower levels in roots, young leaves, mature leaves and stems.

Its subcellular location is the cell membrane. The catalysed reaction is ATP + protein L-histidine = ADP + protein N-phospho-L-histidine.. Functionally, cytokinin receptor related to bacterial two-component regulators. Functions as a histidine kinase and transmits the stress signal to a downstream MAPK cascade. This Oryza sativa subsp. japonica (Rice) protein is Probable histidine kinase 6.